Here is a 743-residue protein sequence, read N- to C-terminus: Homeobox-leucine zipper protein PROTODERMAL FACTOR 2 (743 aa).

The interval 1–72 is disordered; it reads MYHPNMFESH…KKRYHRHTQR (72 aa). Over residues 30 to 39 the composition is skewed to basic and acidic residues; sequence SREDDFETKS. Positions 60–71 are enriched in basic residues; the sequence is PNKKKRYHRHTQ. The segment at residues 62–121 is a DNA-binding region (homeobox); sequence KKKRYHRHTQRQIQELESFFKECPHPDDKQRKELSRDLNLEPLQVKFWFQNKRTQMKAQS. Residues 110–192 adopt a coiled-coil conformation; the sequence is FQNKRTQMKA…DRISAIAAKY (83 aa). In terms of domain architecture, START spans 244 to 476; the sequence is SETDKPIIVE…LERQCERLAS (233 aa).

This sequence belongs to the HD-ZIP homeobox family. Class IV subfamily. Interacts with GAI/RGA2, RGA/RGA1/GRS, RGL2/SCL19 and ATML1. Binds to AIL7/PLT7, ANT, BBM and AIL1. In terms of tissue distribution, specifically expressed in the layer 1 (L1) of shoot meristems.

Its subcellular location is the nucleus. In terms of biological role, probable transcription factor that binds to the L1 box DNA sequence 5'-TAAATG[CT]A-3'. Plays a role in maintaining the identity of L1 cells, possibly by interacting with their L1 box or other target-gene promoters; binds to the LIP1 gene promoter and stimulates its expression upon imbibition. Acts as a positive regulator of gibberellins (GAs)-regulated epidermal gene expression (e.g. LIP1, LIP2, LTP1, FDH and PDF1). Functionally redundant to ATML1. Involved, together with HDG proteins (e.g. HDG1, HDG2, HDG5 and HDG12), in the regulation of flower organs development by promoting the expression of APETALA 3 (AP3) in the epidermis and internal cell layers of developing flowers. Seems to promote cell differentiation. This is Homeobox-leucine zipper protein PROTODERMAL FACTOR 2 from Arabidopsis thaliana (Mouse-ear cress).